Here is a 360-residue protein sequence, read N- to C-terminus: Complement control protein homolog (360 aa).

The first 20 residues, 1–20 (MYTLHYICLVLSCVIYFVWT), serve as a signal peptide directing secretion. 4 Sushi domains span residues 21-81 (LSCP…KCQK), 82-144 (KKCS…ICDI), 145-207 (KKCK…KCEF), and 208-266 (IFCK…ECMK). Intrachain disulfides connect Cys-23–Cys-68, Cys-54–Cys-79, Cys-84–Cys-125, Cys-111–Cys-142, Cys-147–Cys-191, Cys-175–Cys-205, Cys-210–Cys-252, and Cys-238–Cys-264. 4 N-linked (GlcNAc...) asparagine; by host glycosylation sites follow: Asn-36, Asn-39, Asn-46, and Asn-72. N-linked (GlcNAc...) asparagine; by host glycosylation is present at Asn-155. N-linked (GlcNAc...) asparagine; by host glycosylation is present at Asn-294. A helical membrane pass occupies residues 328 to 350 (GVLVIILTTSFIIIGIILTGVCL).

This sequence belongs to the receptors of complement activation (RCA) family.

It is found in the membrane. The protein resides in the secreted. The chain is Complement control protein homolog (4) from Saimiriine herpesvirus 2 (strain 11) (SaHV-2).